The following is a 728-amino-acid chain: Polyribonucleotide nucleotidyltransferase (728 aa).

The Mg(2+) site is built by aspartate 503 and aspartate 509. One can recognise a KH domain in the interval 570–629; the sequence is PRLTTIKIPSDCIGMVIGKGGETIRGITEETGAEINIADDGTVTIACTTKEGTDAALATI. Residues 639–713 enclose the S1 motif domain; the sequence is GNIYVGKVRD…GKTKFALSIK (75 aa).

This sequence belongs to the polyribonucleotide nucleotidyltransferase family. Mg(2+) serves as cofactor.

The protein resides in the cytoplasm. It catalyses the reaction RNA(n+1) + phosphate = RNA(n) + a ribonucleoside 5'-diphosphate. In terms of biological role, involved in mRNA degradation. Catalyzes the phosphorolysis of single-stranded polyribonucleotides processively in the 3'- to 5'-direction. The polypeptide is Polyribonucleotide nucleotidyltransferase (Chlorobium chlorochromatii (strain CaD3)).